We begin with the raw amino-acid sequence, 205 residues long: Large ribosomal subunit protein uL4 (205 aa).

A disordered region spans residues 44 to 77 (KRQGTSKVKNRSAVRGGGKKPWRQKGTGRARQGS). Over residues 51–71 (VKNRSAVRGGGKKPWRQKGTG) the composition is skewed to basic residues.

Belongs to the universal ribosomal protein uL4 family. In terms of assembly, part of the 50S ribosomal subunit.

Its function is as follows. One of the primary rRNA binding proteins, this protein initially binds near the 5'-end of the 23S rRNA. It is important during the early stages of 50S assembly. It makes multiple contacts with different domains of the 23S rRNA in the assembled 50S subunit and ribosome. Functionally, forms part of the polypeptide exit tunnel. This is Large ribosomal subunit protein uL4 from Lactobacillus delbrueckii subsp. bulgaricus (strain ATCC 11842 / DSM 20081 / BCRC 10696 / JCM 1002 / NBRC 13953 / NCIMB 11778 / NCTC 12712 / WDCM 00102 / Lb 14).